A 147-amino-acid polypeptide reads, in one-letter code: Transcriptional repressor NrdR (147 aa).

A zinc finger spans residues 3–34 (CLFCRSDDTKVIDSRTSEDGISIRRRRECQLC). Residues 46-136 (LTVIKRNGTS…VYQDFDSLED (91 aa)) enclose the ATP-cone domain.

Belongs to the NrdR family. Requires Zn(2+) as cofactor.

Functionally, negatively regulates transcription of bacterial ribonucleotide reductase nrd genes and operons by binding to NrdR-boxes. The chain is Transcriptional repressor NrdR from Tropheryma whipplei (strain TW08/27) (Whipple's bacillus).